The sequence spans 257 residues: Small ribosomal subunit protein uS15m (257 aa).

The N-terminal 57 residues, 1–57 (MLRAAWRALSSVRVQAVTQAPVPALRARSSASLPSARCGLQTPSLLNAARAYAVQKP), are a transit peptide targeting the mitochondrion. The disordered stretch occupies residues 228–257 (KAAAAAAKKEKRERVPENPSNALPEKTKEN). The span at 234–243 (AKKEKRERVP) shows a compositional bias: basic and acidic residues.

It belongs to the universal ribosomal protein uS15 family. In terms of assembly, component of the mitochondrial ribosome small subunit (28S) which comprises a 12S rRNA and about 30 distinct proteins. Interacts with METTL17.

It localises to the mitochondrion matrix. This Rattus norvegicus (Rat) protein is Small ribosomal subunit protein uS15m (Mrps15).